Reading from the N-terminus, the 499-residue chain is GTPase Der (499 aa).

2 EngA-type G domains span residues 3 to 166 (PVVA…MDEV) and 211 to 384 (IKLA…DCST). GTP contacts are provided by residues 9–16 (GRPNVGKS), 56–60 (DTGGI), 118–121 (NKTD), 217–224 (GRPNVGKS), 264–268 (DTAGV), and 329–332 (NKWD). The KH-like domain maps to 385 to 469 (RRVNTSMLTR…PIRIQFKEGD (85 aa)).

The protein belongs to the TRAFAC class TrmE-Era-EngA-EngB-Septin-like GTPase superfamily. EngA (Der) GTPase family. Associates with the 50S ribosomal subunit.

GTPase that plays an essential role in the late steps of ribosome biogenesis. The sequence is that of GTPase Der from Erwinia tasmaniensis (strain DSM 17950 / CFBP 7177 / CIP 109463 / NCPPB 4357 / Et1/99).